The sequence spans 715 residues: Palmitoyltransferase ZDHHC5 (715 aa).

The Cytoplasmic portion of the chain corresponds to 1–13 (MPAESGKRFKPSK). A helical transmembrane segment spans residues 14 to 34 (YVPVSAAAIFLVGATTLFFAF). Topologically, residues 35–38 (TCPG) are extracellular. The helical transmembrane segment at 39–59 (LSLYVSPAVPIYNAIMFLFVL) threads the bilayer. The Cytoplasmic segment spans residues 60-148 (ANFSMATFMD…NCIGRRNYRY (89 aa)). Tyr-91 is subject to Phosphotyrosine. Positions 104–154 (KWCATCRFYRPPRCSHCSVCDNCVEEFDHHCPWVNNCIGRRNYRYFFLFLL) constitute a DHHC domain. Cys-134 acts as the S-palmitoyl cysteine intermediate in catalysis. A helical transmembrane segment spans residues 149 to 169 (FFLFLLSLTAHIMGVFGFGLL). The Extracellular segment spans residues 170–191 (YVLYHIEELSGVRTAVTMAVMC). Residues 192–212 (VAGLFFIPVAGLTGFHVVLVA) form a helical membrane-spanning segment. Topologically, residues 213 to 715 (RGRTTNEQVT…VGGTTYEISV (503 aa)) are cytoplasmic. Phosphoserine is present on Ser-247. Residues 289–715 (GELRRTKSKG…VGGTTYEISV (427 aa)) form a disordered region. Thr-294 carries the post-translational modification Phosphothreonine. Ser-296 and Ser-299 each carry phosphoserine. Thr-303 is modified (phosphothreonine). Ser-345 carries the post-translational modification Phosphoserine. Phosphothreonine is present on residues Thr-348 and Thr-350. A compositionally biased stretch (low complexity) spans 359-373 (SSSSTSAAMPHSSSA). A phosphoserine mark is found at Ser-380, Ser-398, Ser-406, and Ser-409. Thr-411 carries the post-translational modification Phosphothreonine. Ser-415, Ser-425, Ser-429, and Ser-432 each carry phosphoserine. The span at 422–432 (SSGSRSSSLKS) shows a compositional bias: low complexity. Position 436 is a phosphothreonine (Thr-436). Residues 442 to 478 (QLQSIRSEGTTSTSYKSLANQTRNGSLSYDSLLTPSD) show a composition bias toward polar residues. A phosphoserine mark is found at Ser-529 and Ser-554. Position 617 is an omega-N-methylarginine (Arg-617). At Ser-621 the chain carries Phosphoserine. Thr-659 carries the post-translational modification Phosphothreonine. The segment covering 666 to 677 (LKTTYSKSNGQP) has biased composition (polar residues). Phosphoserine occurs at positions 684 and 694. Arg-697 is subject to Omega-N-methylarginine.

This sequence belongs to the DHHC palmitoyltransferase family. ERF2/ZDHHC9 subfamily.

It is found in the cell membrane. The enzyme catalyses L-cysteinyl-[protein] + hexadecanoyl-CoA = S-hexadecanoyl-L-cysteinyl-[protein] + CoA. In terms of biological role, palmitoyltransferase that catalyzes the addition of palmitate onto various protein substrates such as CTNND2, CD36, GSDMD, NLRP3, NOD1, NOD2, STAT3 and S1PR1 thus plays a role in various biological processes including cell adhesion, inflammation, fatty acid uptake, bacterial sensing or cardiac functions. Plays an important role in the regulation of synapse efficacy by mediating palmitoylation of delta-catenin/CTNND2, thereby increasing synaptic delivery and surface stabilization of alpha-amino-3-hydroxy-5-methyl-4-isoxazole propionic acid receptors (AMPARs). Under basal conditions, remains at the synaptic membrane through FYN-mediated phosphorylation that prevents association with endocytic proteins. Neuronal activity enhances the internalization and trafficking of DHHC5 from spines to dendritic shafts where it palmitoylates delta-catenin/CTNND2. Regulates cell adhesion at the plasma membrane by palmitoylating GOLGA7B and DSG2. Plays a role in innate immune response by mediating the palmitoylation of NOD1 and NOD2 and their proper recruitment to the bacterial entry site and phagosomes. Also participates in fatty acid uptake by palmitoylating CD36 and thereby targeting it to the plasma membrane. Upon binding of fatty acids to CD36, gets phosphorylated by LYN leading to inactivation and subsequent CD36 caveolar endocytosis. Controls oligodendrocyte development by catalyzing STAT3 palmitoylation. Acts as a regulator of inflammatory response by mediating palmitoylation of NLRP3 and GSDMD. Palmitoylates NLRP3 to promote inflammasome assembly and activation. Activates pyroptosis by catalyzing palmitoylation of gasdermin-D (GSDMD), thereby promoting membrane translocation and pore formation of GSDMD. This Pan troglodytes (Chimpanzee) protein is Palmitoyltransferase ZDHHC5 (ZDHHC5).